A 354-amino-acid chain; its full sequence is Uroporphyrinogen decarboxylase (354 aa).

Substrate-binding positions include 27–31, Asp77, Tyr154, Thr209, and His327; that span reads RQAGR.

The protein belongs to the uroporphyrinogen decarboxylase family. As to quaternary structure, homodimer.

It is found in the cytoplasm. It catalyses the reaction uroporphyrinogen III + 4 H(+) = coproporphyrinogen III + 4 CO2. The protein operates within porphyrin-containing compound metabolism; protoporphyrin-IX biosynthesis; coproporphyrinogen-III from 5-aminolevulinate: step 4/4. Its function is as follows. Catalyzes the decarboxylation of four acetate groups of uroporphyrinogen-III to yield coproporphyrinogen-III. The protein is Uroporphyrinogen decarboxylase of Pseudomonas putida (strain W619).